We begin with the raw amino-acid sequence, 102 residues long: Large ribosomal subunit protein uL24 (102 aa).

The protein belongs to the universal ribosomal protein uL24 family. In terms of assembly, part of the 50S ribosomal subunit.

In terms of biological role, one of two assembly initiator proteins, it binds directly to the 5'-end of the 23S rRNA, where it nucleates assembly of the 50S subunit. Its function is as follows. One of the proteins that surrounds the polypeptide exit tunnel on the outside of the subunit. The chain is Large ribosomal subunit protein uL24 from Cupriavidus necator (strain ATCC 17699 / DSM 428 / KCTC 22496 / NCIMB 10442 / H16 / Stanier 337) (Ralstonia eutropha).